Reading from the N-terminus, the 181-residue chain is Large ribosomal subunit protein uL10 (181 aa).

The protein belongs to the universal ribosomal protein uL10 family. As to quaternary structure, part of the ribosomal stalk of the 50S ribosomal subunit. The N-terminus interacts with L11 and the large rRNA to form the base of the stalk. The C-terminus forms an elongated spine to which L12 dimers bind in a sequential fashion forming a multimeric L10(L12)X complex.

Forms part of the ribosomal stalk, playing a central role in the interaction of the ribosome with GTP-bound translation factors. This Amoebophilus asiaticus (strain 5a2) protein is Large ribosomal subunit protein uL10.